Consider the following 119-residue polypeptide: Beta-2-microglobulin (119 aa).

Residues 1–20 (MFRSVALAVLALLFLSGLEA) form the signal peptide. Residues 25–114 (PKIQVYSRHP…VTLSGPRTVK (90 aa)) enclose the Ig-like C1-type domain. Cys-45 and Cys-100 are oxidised to a cystine.

Belongs to the beta-2-microglobulin family. Heterodimer of an alpha chain and a beta chain. Beta-2-microglobulin is the beta-chain of major histocompatibility complex class I molecules.

It is found in the secreted. Its function is as follows. Component of the class I major histocompatibility complex (MHC). Involved in the presentation of peptide antigens to the immune system. The sequence is that of Beta-2-microglobulin (B2M) from Chlorocebus aethiops (Green monkey).